A 97-amino-acid chain; its full sequence is Aspartyl/glutamyl-tRNA(Asn/Gln) amidotransferase subunit C (97 aa).

The protein belongs to the GatC family. Heterotrimer of A, B and C subunits.

It catalyses the reaction L-glutamyl-tRNA(Gln) + L-glutamine + ATP + H2O = L-glutaminyl-tRNA(Gln) + L-glutamate + ADP + phosphate + H(+). It carries out the reaction L-aspartyl-tRNA(Asn) + L-glutamine + ATP + H2O = L-asparaginyl-tRNA(Asn) + L-glutamate + ADP + phosphate + 2 H(+). In terms of biological role, allows the formation of correctly charged Asn-tRNA(Asn) or Gln-tRNA(Gln) through the transamidation of misacylated Asp-tRNA(Asn) or Glu-tRNA(Gln) in organisms which lack either or both of asparaginyl-tRNA or glutaminyl-tRNA synthetases. The reaction takes place in the presence of glutamine and ATP through an activated phospho-Asp-tRNA(Asn) or phospho-Glu-tRNA(Gln). This Listeria innocua serovar 6a (strain ATCC BAA-680 / CLIP 11262) protein is Aspartyl/glutamyl-tRNA(Asn/Gln) amidotransferase subunit C.